A 220-amino-acid chain; its full sequence is Protein LURP-one-related 12 (220 aa).

It belongs to the LOR family.

Its function is as follows. Might be related to the phospholipid scramblase and tubby-like superfamily of membrane tethered transcription factors. In Arabidopsis thaliana (Mouse-ear cress), this protein is Protein LURP-one-related 12.